The sequence spans 331 residues: Phenylalanine--tRNA ligase alpha subunit (331 aa).

E252 is a Mg(2+) binding site.

It belongs to the class-II aminoacyl-tRNA synthetase family. Phe-tRNA synthetase alpha subunit type 1 subfamily. As to quaternary structure, tetramer of two alpha and two beta subunits. The cofactor is Mg(2+).

Its subcellular location is the cytoplasm. It catalyses the reaction tRNA(Phe) + L-phenylalanine + ATP = L-phenylalanyl-tRNA(Phe) + AMP + diphosphate + H(+). This Xanthomonas euvesicatoria pv. vesicatoria (strain 85-10) (Xanthomonas campestris pv. vesicatoria) protein is Phenylalanine--tRNA ligase alpha subunit.